A 357-amino-acid chain; its full sequence is Glycerol-3-phosphate dehydrogenase [NAD(P)+] (357 aa).

The NADPH site is built by Ser-30, Phe-31, Arg-51, and Lys-124. Residues Lys-124 and Gly-152 each contribute to the sn-glycerol 3-phosphate site. Ala-156 contributes to the NADPH binding site. The sn-glycerol 3-phosphate site is built by Lys-207, Asp-260, Ser-270, Arg-271, and Asn-272. Lys-207 acts as the Proton acceptor in catalysis. Position 271 (Arg-271) interacts with NADPH. NADPH is bound at residue Glu-297.

Belongs to the NAD-dependent glycerol-3-phosphate dehydrogenase family.

The protein localises to the cytoplasm. The enzyme catalyses sn-glycerol 3-phosphate + NAD(+) = dihydroxyacetone phosphate + NADH + H(+). It catalyses the reaction sn-glycerol 3-phosphate + NADP(+) = dihydroxyacetone phosphate + NADPH + H(+). The protein operates within membrane lipid metabolism; glycerophospholipid metabolism. In terms of biological role, catalyzes the reduction of the glycolytic intermediate dihydroxyacetone phosphate (DHAP) to sn-glycerol 3-phosphate (G3P), the key precursor for phospholipid synthesis. This Acinetobacter baylyi (strain ATCC 33305 / BD413 / ADP1) protein is Glycerol-3-phosphate dehydrogenase [NAD(P)+].